A 715-amino-acid chain; its full sequence is Methylcrotonoyl-CoA carboxylase subunit alpha, mitochondrial (715 aa).

A mitochondrion-targeting transit peptide spans 1–38 (MAAAALLAAVDRNQLRRVPILLLQPREWPWKHRTVKYG). The 446-residue stretch at 45 to 490 (ITKVLIANRG…HTDFIPQHHK (446 aa)) folds into the Biotin carboxylation domain. Lysine 159 is a binding site for ATP. Residues 163 to 360 (KSIMAAAGVP…LVEWQLRIAA (198 aa)) form the ATP-grasp domain. Lysine 193 is modified (N6-acetyllysine). ATP contacts are provided by residues lysine 201 and 207 to 208 (GG). N6-acetyllysine is present on lysine 233. Residues histidine 251, histidine 278, and glutamate 318 each contribute to the ATP site. The active site involves arginine 335. Lysine 490 bears the N6-acetyllysine mark. Position 577 is an N6-acetyllysine; alternate (lysine 577). Residue lysine 577 is modified to N6-succinyllysine; alternate. Residues 622 to 711 (SIEVGIPVPK…NRHAPLVEFE (90 aa)) enclose the Biotinyl-binding domain. Lysine 677 is modified (N6-biotinyllysine).

As to quaternary structure, probably a dodecamer composed of six biotin-containing alpha subunits (MCCC1) and six beta (MCCC2) subunits. Interacts (via the biotin carboxylation domain) with SIRT4. Biotin serves as cofactor. Acetylated.

It is found in the mitochondrion matrix. The enzyme catalyses 3-methylbut-2-enoyl-CoA + hydrogencarbonate + ATP = 3-methyl-(2E)-glutaconyl-CoA + ADP + phosphate + H(+). The protein operates within amino-acid degradation; L-leucine degradation; (S)-3-hydroxy-3-methylglutaryl-CoA from 3-isovaleryl-CoA: step 2/3. Functionally, biotin-attachment subunit of the 3-methylcrotonyl-CoA carboxylase, an enzyme that catalyzes the conversion of 3-methylcrotonyl-CoA to 3-methylglutaconyl-CoA, a critical step for leucine and isovaleric acid catabolism. The chain is Methylcrotonoyl-CoA carboxylase subunit alpha, mitochondrial from Rattus norvegicus (Rat).